The following is a 165-amino-acid chain: Chorismate pyruvate-lyase (165 aa).

Residues Met-35, Arg-77, Leu-115, and Glu-156 each coordinate substrate.

Belongs to the UbiC family. Monomer.

The protein resides in the cytoplasm. The catalysed reaction is chorismate = 4-hydroxybenzoate + pyruvate. Its pathway is cofactor biosynthesis; ubiquinone biosynthesis. Functionally, removes the pyruvyl group from chorismate, with concomitant aromatization of the ring, to provide 4-hydroxybenzoate (4HB) for the ubiquinone pathway. The sequence is that of Chorismate pyruvate-lyase from Salmonella schwarzengrund (strain CVM19633).